Consider the following 300-residue polypeptide: GTPase Era (300 aa).

The region spanning 8–176 (RCGYVAIVGR…ESLIASHLPE (169 aa)) is the Era-type G domain. The G1 stretch occupies residues 16–23 (GRPNVGKS). 16–23 (GRPNVGKS) is a binding site for GTP. The segment at 42-46 (QTTRH) is G2. The tract at residues 63–66 (DTPG) is G3. GTP is bound by residues 63 to 67 (DTPGM) and 125 to 128 (NKTD). The segment at 125–128 (NKTD) is G4. A G5 region spans residues 155–157 (ISA). The KH type-2 domain occupies 199 to 283 (VREKIMRQLG…MLNLWVKVKG (85 aa)).

It belongs to the TRAFAC class TrmE-Era-EngA-EngB-Septin-like GTPase superfamily. Era GTPase family. As to quaternary structure, monomer.

It is found in the cytoplasm. The protein resides in the cell inner membrane. An essential GTPase that binds both GDP and GTP, with rapid nucleotide exchange. Plays a role in 16S rRNA processing and 30S ribosomal subunit biogenesis and possibly also in cell cycle regulation and energy metabolism. This chain is GTPase Era, found in Pseudomonas syringae pv. tomato (strain ATCC BAA-871 / DC3000).